The sequence spans 432 residues: MTVKAAEASGPALTYSKMRGMVAILIAFMKQRRMGLNDFIQKIATNSYACKHPEVQSILKISQPQEPELMNANPSPPPSPSQQINLGPSSNPHAKPSDFHFLKVIGKGSFGKVLLARHKAEEQFYAVKVLQKKAILKKKEEKHIMSERNVLLKNVKHPFLVGLHFSFQTADKLYFVLDYINGGELFYHLQRERCFLEPRARFYAAEIASALGYLHSLNIVYRDLKPENILLDSQGHIVLTDFGLCKENIEHNGTTSTFCGTPEYLAPEVLHKQPYDRTVDWWCLGAVLYEMLYGLPPFYSRNTAEMYDNILNKPLQLKPNITNSARHLLEGLLQKDRTKRLGAKEDFTEIKNHIFFSPINWDDLINKKITPPFNPNVSGPSDLRHFDPEFTDEPVPNSIGQSPDSILITASVKEAAEAFLGFSYAPPVDSFL.

Positions 67–93 (PELMNANPSPPPSPSQQINLGPSSNPH) are disordered. Polar residues predominate over residues 82 to 92 (QQINLGPSSNP). Residues 99–356 (FHFLKVIGKG…FTEIKNHIFF (258 aa)) enclose the Protein kinase domain. Residues 105 to 113 (IGKGSFGKV) and Lys128 contribute to the ATP site. Asp223 functions as the Proton acceptor in the catalytic mechanism. The AGC-kinase C-terminal domain maps to 357 to 432 (SPINWDDLIN…SYAPPVDSFL (76 aa)).

This sequence belongs to the protein kinase superfamily. AGC Ser/Thr protein kinase family.

The protein resides in the cytoplasm. It localises to the nucleus. The protein localises to the endoplasmic reticulum. It carries out the reaction L-seryl-[protein] + ATP = O-phospho-L-seryl-[protein] + ADP + H(+). It catalyses the reaction L-threonyl-[protein] + ATP = O-phospho-L-threonyl-[protein] + ADP + H(+). Protein kinase that may play an important role in cellular stress response. May be involved in the regulation of processes such as cell survival, neuronal excitability and renal sodium excretion. The sequence is that of Serine/threonine-protein kinase Sgk1 (SGK1) from Gallus gallus (Chicken).